We begin with the raw amino-acid sequence, 549 residues long: Cation/acetate symporter ActP (549 aa).

13 helical membrane-spanning segments follow: residues 33 to 53 (WQAIIMFLIFVVFTLGITYWA), 77 to 97 (LAIAGDYMSAASFLGISALVF), 103 to 123 (GLIYSLGFLVGWPIILFLIAE), 148 to 168 (ILSACGSLVVVALYLIAQMVG), 183 to 203 (IAVVLVGVLMMMYVLFGGMLA), 206 to 226 (WVQIIKAVLLLFGASFMAFMV), 262 to 282 (ISALSLGLGLMFGTAGLPHIL), 303 to 323 (GFMGYFYILTFIIGFGAIMLV), 355 to 375 (LFLGFISAVAFATILAVVAGL), 404 to 424 (VSKITVLVLGVIAIILGVLFE), 428 to 448 (IAFMVGLAFAIAASCNFPIIL), 464 to 484 (GGWLGLLTAVVLMILGPTIWV), and 493 to 513 (IFPYEYPALFSISVAFLGIWF).

This sequence belongs to the sodium:solute symporter (SSF) (TC 2.A.21) family.

The protein resides in the cell inner membrane. Transports acetate. This chain is Cation/acetate symporter ActP, found in Salmonella arizonae (strain ATCC BAA-731 / CDC346-86 / RSK2980).